Consider the following 351-residue polypeptide: Photosystem II D2 protein (351 aa).

Residues 39–59 (CAFLALGGWLTGTTFVTSWYT) traverse the membrane as a helical segment. Chlorophyll a is bound at residue histidine 116. A helical membrane pass occupies residues 123–139 (GFMLRQFEIARLVGIRP). Residues glutamine 128 and asparagine 141 each contribute to the pheophytin a site. Residues 151 to 164 (VFVSVFLMYPLGQS) traverse the membrane as a helical segment. A chlorophyll a-binding site is contributed by histidine 196. The helical transmembrane segment at 206–226 (GALLCAIHGATVENTLFEDGE) threads the bilayer. A plastoquinone-binding residues include histidine 213 and phenylalanine 260. Residue histidine 213 participates in Fe cation binding. A Fe cation-binding site is contributed by histidine 267. A helical transmembrane segment spans residues 277–293 (GLWMSAVGIVGLALNLR).

It belongs to the reaction center PufL/M/PsbA/D family. In terms of assembly, PSII is composed of 1 copy each of membrane proteins PsbA, PsbB, PsbC, PsbD, PsbE, PsbF, PsbH, PsbI, PsbJ, PsbK, PsbL, PsbM, PsbT, PsbX, PsbY, PsbZ, Psb30/Ycf12, peripheral proteins PsbO, CyanoQ (PsbQ), PsbU, PsbV and a large number of cofactors. It forms dimeric complexes. The cofactor is The D1/D2 heterodimer binds P680, chlorophylls that are the primary electron donor of PSII, and subsequent electron acceptors. It shares a non-heme iron and each subunit binds pheophytin, quinone, additional chlorophylls, carotenoids and lipids. There is also a Cl(-1) ion associated with D1 and D2, which is required for oxygen evolution. The PSII complex binds additional chlorophylls, carotenoids and specific lipids..

Its subcellular location is the cellular thylakoid membrane. The catalysed reaction is 2 a plastoquinone + 4 hnu + 2 H2O = 2 a plastoquinol + O2. Functionally, photosystem II (PSII) is a light-driven water:plastoquinone oxidoreductase that uses light energy to abstract electrons from H(2)O, generating O(2) and a proton gradient subsequently used for ATP formation. It consists of a core antenna complex that captures photons, and an electron transfer chain that converts photonic excitation into a charge separation. The D1/D2 (PsbA/PsbD) reaction center heterodimer binds P680, the primary electron donor of PSII as well as several subsequent electron acceptors. D2 is needed for assembly of a stable PSII complex. The chain is Photosystem II D2 protein from Nostoc sp. (strain PCC 7120 / SAG 25.82 / UTEX 2576).